We begin with the raw amino-acid sequence, 435 residues long: ATP-dependent protease ATPase subunit HslU (435 aa).

Residues valine 18, 60 to 65 (GCGKTE), aspartate 248, glutamate 313, and arginine 385 contribute to the ATP site.

This sequence belongs to the ClpX chaperone family. HslU subfamily. As to quaternary structure, a double ring-shaped homohexamer of HslV is capped on each side by a ring-shaped HslU homohexamer. The assembly of the HslU/HslV complex is dependent on binding of ATP.

It is found in the cytoplasm. ATPase subunit of a proteasome-like degradation complex; this subunit has chaperone activity. The binding of ATP and its subsequent hydrolysis by HslU are essential for unfolding of protein substrates subsequently hydrolyzed by HslV. HslU recognizes the N-terminal part of its protein substrates and unfolds these before they are guided to HslV for hydrolysis. The polypeptide is ATP-dependent protease ATPase subunit HslU (Beijerinckia indica subsp. indica (strain ATCC 9039 / DSM 1715 / NCIMB 8712)).